Consider the following 163-residue polypeptide: UPF0523 protein B (163 aa).

The protein belongs to the UPF0523 family.

The chain is UPF0523 protein B from Dictyostelium discoideum (Social amoeba).